Reading from the N-terminus, the 284-residue chain is 2-dehydro-3-deoxyphosphooctonate aldolase (284 aa).

This sequence belongs to the KdsA family.

It is found in the cytoplasm. The catalysed reaction is D-arabinose 5-phosphate + phosphoenolpyruvate + H2O = 3-deoxy-alpha-D-manno-2-octulosonate-8-phosphate + phosphate. It functions in the pathway carbohydrate biosynthesis; 3-deoxy-D-manno-octulosonate biosynthesis; 3-deoxy-D-manno-octulosonate from D-ribulose 5-phosphate: step 2/3. The protein operates within bacterial outer membrane biogenesis; lipopolysaccharide biosynthesis. In Pectobacterium carotovorum subsp. carotovorum (strain PC1), this protein is 2-dehydro-3-deoxyphosphooctonate aldolase.